The primary structure comprises 773 residues: Subtilisin-like protease SBT3.4 (773 aa).

The signal sequence occupies residues 1–23 (MRNFRSSVLVVLSLIIVLNVARA). Positions 24 to 108 (SAKSKVHIVY…VIPDSYYELA (85 aa)) are cleaved as a propeptide — activation peptide. An Inhibitor I9 domain is found at 29–108 (VHIVYLGEKQ…VIPDSYYELA (80 aa)). Residues 112–620 (IWDYLGPSAD…GGLVNPEKAA (509 aa)) enclose the Peptidase S8 domain. Residue D142 is the Charge relay system of the active site. N-linked (GlcNAc...) asparagine glycosylation occurs at N200. The active-site Charge relay system is the H216. Residues N231, N408, and N536 are each glycosylated (N-linked (GlcNAc...) asparagine). In terms of domain architecture, PA spans 382 to 474 (SLVYPEDPGN…IDNELGTDIL (93 aa)). Residue S551 is the Charge relay system of the active site. An N-linked (GlcNAc...) asparagine glycan is attached at N643.

Belongs to the peptidase S8 family.

It is found in the secreted. In Arabidopsis thaliana (Mouse-ear cress), this protein is Subtilisin-like protease SBT3.4.